The sequence spans 48 residues: M-oxotoxin-Ot1c (48 aa).

It is found in the secreted. The protein localises to the target cell membrane. Its function is as follows. Disrupts cell membranes, particularly those rich in phosphocholine, through formation of pores. Has antimicrobial activity, hemolytic activity and insecticidal activity. The chain is M-oxotoxin-Ot1c from Oxyopes takobius (Lynx spider).